The chain runs to 120 residues: Large ribosomal subunit protein bL20 (120 aa).

The protein belongs to the bacterial ribosomal protein bL20 family.

Binds directly to 23S ribosomal RNA and is necessary for the in vitro assembly process of the 50S ribosomal subunit. It is not involved in the protein synthesizing functions of that subunit. The polypeptide is Large ribosomal subunit protein bL20 (Ureaplasma parvum serovar 3 (strain ATCC 27815 / 27 / NCTC 11736)).